We begin with the raw amino-acid sequence, 170 residues long: Co-chaperone protein HscB homolog (170 aa).

In terms of domain architecture, J spans 5–79; that stretch reads DHFSLFGLPA…RARYLCEQAG (75 aa).

This sequence belongs to the HscB family. Interacts with HscA and stimulates its ATPase activity.

Co-chaperone involved in the maturation of iron-sulfur cluster-containing proteins. Seems to help targeting proteins to be folded toward HscA. The chain is Co-chaperone protein HscB homolog from Bordetella petrii (strain ATCC BAA-461 / DSM 12804 / CCUG 43448).